A 101-amino-acid polypeptide reads, in one-letter code: Small ribosomal subunit protein uS14 (101 aa).

Positions 1–26 (MAKVSSIKKNESRKKKSQSLHNKRSA) are disordered. The segment covering 11 to 26 (ESRKKKSQSLHNKRSA) has biased composition (basic residues).

The protein belongs to the universal ribosomal protein uS14 family. Part of the 30S ribosomal subunit. Contacts proteins S3 and S10.

Binds 16S rRNA, required for the assembly of 30S particles and may also be responsible for determining the conformation of the 16S rRNA at the A site. The chain is Small ribosomal subunit protein uS14 from Rickettsia felis (strain ATCC VR-1525 / URRWXCal2) (Rickettsia azadi).